Consider the following 158-residue polypeptide: Secreted RxLR effector protein 2 (158 aa).

The first 21 residues, 1 to 21 (MRLLLWVLLVTLVTFLSSGDA), serve as a signal peptide directing secretion. Positions 54-75 (RFLRGDRSNIVNLKDGDENEER) match the RxLR-dEER motif.

The protein belongs to the RxLR effector family.

It localises to the secreted. It is found in the host cell. Its function is as follows. Secreted effector that completely suppresses elicitor-induced cell death in host and enhances virulence of P.parasitica. The chain is Secreted RxLR effector protein 2 from Phytophthora nicotianae (Potato buckeye rot agent).